A 126-amino-acid polypeptide reads, in one-letter code: Cysteine-rich tail protein 1 (126 aa).

The segment at 1–89 (MDPHETLVKN…PAGLAYAGPP (89 aa)) is disordered.

It belongs to the CYSRT1 family. In terms of assembly, interacts with components of the late cornfied envelope (LCE).

It is found in the cornified envelope. In terms of biological role, component of the stratum corneum that may contribute to epidermal antimicrobial host defenses. The sequence is that of Cysteine-rich tail protein 1 (CYSRT1) from Bos taurus (Bovine).